Consider the following 464-residue polypeptide: Soluble pyridine nucleotide transhydrogenase (464 aa).

Aspartate 35 to cysteine 44 serves as a coordination point for FAD.

The protein belongs to the class-I pyridine nucleotide-disulfide oxidoreductase family. It depends on FAD as a cofactor.

It is found in the cytoplasm. The catalysed reaction is NAD(+) + NADPH = NADH + NADP(+). Conversion of NADPH, generated by peripheral catabolic pathways, to NADH, which can enter the respiratory chain for energy generation. In Pseudomonas fluorescens (strain ATCC BAA-477 / NRRL B-23932 / Pf-5), this protein is Soluble pyridine nucleotide transhydrogenase.